Here is a 383-residue protein sequence, read N- to C-terminus: Queuine tRNA-ribosyltransferase (383 aa).

The active-site Proton acceptor is the aspartate 92. Substrate is bound by residues aspartate 92 to phenylalanine 96, aspartate 146, glutamine 190, and glycine 217. Residues glycine 248–aspartate 254 form an RNA binding region. The active-site Nucleophile is the aspartate 267. The RNA binding; important for wobble base 34 recognition stretch occupies residues threonine 272–arginine 276. 4 residues coordinate Zn(2+): cysteine 310, cysteine 312, cysteine 315, and histidine 341.

It belongs to the queuine tRNA-ribosyltransferase family. As to quaternary structure, homodimer. Within each dimer, one monomer is responsible for RNA recognition and catalysis, while the other monomer binds to the replacement base PreQ1. It depends on Zn(2+) as a cofactor.

The enzyme catalyses 7-aminomethyl-7-carbaguanine + guanosine(34) in tRNA = 7-aminomethyl-7-carbaguanosine(34) in tRNA + guanine. The protein operates within tRNA modification; tRNA-queuosine biosynthesis. In terms of biological role, catalyzes the base-exchange of a guanine (G) residue with the queuine precursor 7-aminomethyl-7-deazaguanine (PreQ1) at position 34 (anticodon wobble position) in tRNAs with GU(N) anticodons (tRNA-Asp, -Asn, -His and -Tyr). Catalysis occurs through a double-displacement mechanism. The nucleophile active site attacks the C1' of nucleotide 34 to detach the guanine base from the RNA, forming a covalent enzyme-RNA intermediate. The proton acceptor active site deprotonates the incoming PreQ1, allowing a nucleophilic attack on the C1' of the ribose to form the product. After dissociation, two additional enzymatic reactions on the tRNA convert PreQ1 to queuine (Q), resulting in the hypermodified nucleoside queuosine (7-(((4,5-cis-dihydroxy-2-cyclopenten-1-yl)amino)methyl)-7-deazaguanosine). The protein is Queuine tRNA-ribosyltransferase of Psychrobacter cryohalolentis (strain ATCC BAA-1226 / DSM 17306 / VKM B-2378 / K5).